Here is a 122-residue protein sequence, read N- to C-terminus: MKRVLNLGNLSRIVEGDPNEITDDEILVIKDKIIEGKIIDIQKRVDGKLVSLITEKYTYTINPTPADAIVVINGSTTKSIRAAKGHTVTWSVSKTGFVTQSGSDVISGDVSKDVTLVANPAS.

Homodimer. Interacts with the major capsid protein.

The protein localises to the virion. Forms short fibers at the surface of the viral capsid. The protein is Head fiber dimeric protein of Bacteroides intestinalis (Bacteroides phage PhiCrAss001).